Reading from the N-terminus, the 216-residue chain is Peptide methionine sulfoxide reductase MsrA (216 aa).

C57 is an active-site residue.

The protein belongs to the MsrA Met sulfoxide reductase family.

The catalysed reaction is L-methionyl-[protein] + [thioredoxin]-disulfide + H2O = L-methionyl-(S)-S-oxide-[protein] + [thioredoxin]-dithiol. The enzyme catalyses [thioredoxin]-disulfide + L-methionine + H2O = L-methionine (S)-S-oxide + [thioredoxin]-dithiol. Functionally, has an important function as a repair enzyme for proteins that have been inactivated by oxidation. Catalyzes the reversible oxidation-reduction of methionine sulfoxide in proteins to methionine. This is Peptide methionine sulfoxide reductase MsrA from Agrobacterium fabrum (strain C58 / ATCC 33970) (Agrobacterium tumefaciens (strain C58)).